The primary structure comprises 305 residues: Probable xyloglucan endotransglucosylase/hydrolase protein 8 (305 aa).

Positions Met1 to Ala31 are cleaved as a signal peptide. The region spanning Ala32–Tyr231 is the GH16 domain. N-linked (GlcNAc...) asparagine glycans are attached at residues Asn61 and Asn66. Catalysis depends on Glu115, which acts as the Nucleophile. Glu119 acts as the Proton donor in catalysis. Glu119 contributes to the xyloglucan binding site. Asn123 carries N-linked (GlcNAc...) asparagine glycosylation. Gln132–Asn134 provides a ligand contact to xyloglucan. N-linked (GlcNAc...) asparagine glycosylation is present at Asn138. Residues Asn142–Glu144, Asp210–Trp211, and Gly215 contribute to the xyloglucan site. Intrachain disulfides connect Cys239–Cys248 and Cys286–Cys299. Arg291 is a binding site for xyloglucan.

It belongs to the glycosyl hydrolase 16 family. XTH group 1 subfamily. Post-translationally, contains at least one intrachain disulfide bond essential for its enzymatic activity.

The protein resides in the secreted. The protein localises to the cell wall. Its subcellular location is the extracellular space. It localises to the apoplast. It carries out the reaction breaks a beta-(1-&gt;4) bond in the backbone of a xyloglucan and transfers the xyloglucanyl segment on to O-4 of the non-reducing terminal glucose residue of an acceptor, which can be a xyloglucan or an oligosaccharide of xyloglucan.. Its function is as follows. Catalyzes xyloglucan endohydrolysis (XEH) and/or endotransglycosylation (XET). Cleaves and religates xyloglucan polymers, an essential constituent of the primary cell wall, and thereby participates in cell wall construction of growing tissues. The chain is Probable xyloglucan endotransglucosylase/hydrolase protein 8 (XTH8) from Arabidopsis thaliana (Mouse-ear cress).